We begin with the raw amino-acid sequence, 296 residues long: Probable GTP 3',8-cyclase (296 aa).

The Radical SAM core domain occupies Glu5–Lys230. Residue Arg14 coordinates GTP. [4Fe-4S] cluster-binding residues include Cys21 and Cys25. Tyr27 provides a ligand contact to S-adenosyl-L-methionine. Residue Cys28 participates in [4Fe-4S] cluster binding. Residue Lys61 participates in GTP binding. Gly65 is a binding site for S-adenosyl-L-methionine. Thr89 provides a ligand contact to GTP. Ser113 lines the S-adenosyl-L-methionine pocket. Lys150 is a GTP binding site. Cys245 and Cys248 together coordinate [4Fe-4S] cluster. Arg250–Arg252 serves as a coordination point for GTP. Cys262 contacts [4Fe-4S] cluster.

This sequence belongs to the radical SAM superfamily. MoaA family. The cofactor is [4Fe-4S] cluster.

The enzyme catalyses GTP + AH2 + S-adenosyl-L-methionine = (8S)-3',8-cyclo-7,8-dihydroguanosine 5'-triphosphate + 5'-deoxyadenosine + L-methionine + A + H(+). It functions in the pathway cofactor biosynthesis; molybdopterin biosynthesis. Catalyzes the cyclization of GTP to (8S)-3',8-cyclo-7,8-dihydroguanosine 5'-triphosphate. The sequence is that of Probable GTP 3',8-cyclase from Archaeoglobus fulgidus (strain ATCC 49558 / DSM 4304 / JCM 9628 / NBRC 100126 / VC-16).